The following is a 251-amino-acid chain: ATP synthase subunit a (251 aa).

A run of 5 helical transmembrane segments spans residues 14 to 34, 78 to 98, 107 to 127, 174 to 194, and 196 to 216; these read GFVK…LLAV, YLPF…FAVF, SLST…FYGI, MILA…MGVL, and LLIG…YIAA. The segment at 224–251 is disordered; sequence NAGASDDEGGEDAKSACAAGGKICKHKP.

Belongs to the ATPase A chain family. In terms of assembly, F-type ATPases have 2 components, CF(1) - the catalytic core - and CF(0) - the membrane proton channel. CF(1) has five subunits: alpha(3), beta(3), gamma(1), delta(1), epsilon(1). CF(0) has three main subunits: a(1), b(2) and c(9-12). The alpha and beta chains form an alternating ring which encloses part of the gamma chain. CF(1) is attached to CF(0) by a central stalk formed by the gamma and epsilon chains, while a peripheral stalk is formed by the delta and b chains.

It is found in the cell inner membrane. Functionally, key component of the proton channel; it plays a direct role in the translocation of protons across the membrane. The polypeptide is ATP synthase subunit a (Nitrosospira multiformis (strain ATCC 25196 / NCIMB 11849 / C 71)).